The chain runs to 277 residues: Thymidylate synthase (277 aa).

A dUMP-binding site is contributed by Arg-21. His-51 serves as a coordination point for (6R)-5,10-methylene-5,6,7,8-tetrahydrofolate. 126-127 (RR) contacts dUMP. The active-site Nucleophile is the Cys-159. Residues 179–182 (RSGD), Asn-190, and 220–222 (HLY) each bind dUMP. Residue Asp-182 coordinates (6R)-5,10-methylene-5,6,7,8-tetrahydrofolate. Ala-276 is a (6R)-5,10-methylene-5,6,7,8-tetrahydrofolate binding site.

Belongs to the thymidylate synthase family. Bacterial-type ThyA subfamily. In terms of assembly, homodimer.

The protein localises to the cytoplasm. The enzyme catalyses dUMP + (6R)-5,10-methylene-5,6,7,8-tetrahydrofolate = 7,8-dihydrofolate + dTMP. It functions in the pathway pyrimidine metabolism; dTTP biosynthesis. Its function is as follows. Catalyzes the reductive methylation of 2'-deoxyuridine-5'-monophosphate (dUMP) to 2'-deoxythymidine-5'-monophosphate (dTMP) while utilizing 5,10-methylenetetrahydrofolate (mTHF) as the methyl donor and reductant in the reaction, yielding dihydrofolate (DHF) as a by-product. This enzymatic reaction provides an intracellular de novo source of dTMP, an essential precursor for DNA biosynthesis. The protein is Thymidylate synthase of Alcanivorax borkumensis (strain ATCC 700651 / DSM 11573 / NCIMB 13689 / SK2).